The following is a 419-amino-acid chain: Protein-lysine N-methyltransferase EFM2 (419 aa).

Residues W222, 261–263, D290, W318, and A340 contribute to the S-adenosyl-L-methionine site; that span reads GAG.

It belongs to the class I-like SAM-binding methyltransferase superfamily. METTL21 family.

It is found in the cytoplasm. In terms of biological role, S-adenosyl-L-methionine-dependent protein-lysine N-methyltransferase that mono- and dimethylates elongation factor 2 (EFT1/EFT2) at 'Lys-613' and methylates elongation factor 3A (YEF3). The sequence is that of Protein-lysine N-methyltransferase EFM2 from Saccharomyces cerevisiae (strain ATCC 204508 / S288c) (Baker's yeast).